Reading from the N-terminus, the 223-residue chain is UPF0441 protein YgiB (223 aa).

Over residues Thr-178 to Thr-195 the composition is skewed to low complexity. The disordered stretch occupies residues Thr-178–Gly-223. Polar residues predominate over residues Ala-204 to Gly-223.

It belongs to the UPF0441 family.

The protein is UPF0441 protein YgiB of Salmonella heidelberg (strain SL476).